The chain runs to 71 residues: SPI-2 type 3 secretion system needle filament protein (71 aa).

It belongs to the SctF family. The core secretion machinery of the T3SS is composed of approximately 20 different proteins, including cytoplasmic components, a base, an export apparatus and a needle. This subunit polymerizes and forms the helical needle filament.

It localises to the secreted. The protein localises to the cell surface. Its function is as follows. Component of the type III secretion system (T3SS), also called injectisome, which is used to inject bacterial effector proteins into eukaryotic host cells. SsaG/SctF2 forms the external needle filament that protrudes from the bacterial surface. During infection, can induce innate immune responses. The needle proteins interact with host TLR2 or TLR4, and induce signaling by NF-kappa-B and/or AP-1. This activation is MyD88 dependent and results in increased expression of cytokines, including TNF-alpha, IL-6 and IL-8. This Salmonella typhimurium (strain LT2 / SGSC1412 / ATCC 700720) protein is SPI-2 type 3 secretion system needle filament protein.